Consider the following 244-residue polypeptide: Large ribosomal subunit protein uL30A (244 aa).

Positions 1–26 (MAAEKILTPESQLKKSKAQQKTAEQV) are disordered.

The protein belongs to the universal ribosomal protein uL30 family. In terms of assembly, component of the large ribosomal subunit (LSU). Mature yeast ribosomes consist of a small (40S) and a large (60S) subunit. The 40S small subunit contains 1 molecule of ribosomal RNA (18S rRNA) and 33 different proteins (encoded by 57 genes). The large 60S subunit contains 3 rRNA molecules (25S, 5.8S and 5S rRNA) and 46 different proteins (encoded by 81 genes).

The protein resides in the cytoplasm. In terms of biological role, component of the ribosome, a large ribonucleoprotein complex responsible for the synthesis of proteins in the cell. The small ribosomal subunit (SSU) binds messenger RNAs (mRNAs) and translates the encoded message by selecting cognate aminoacyl-transfer RNA (tRNA) molecules. The large subunit (LSU) contains the ribosomal catalytic site termed the peptidyl transferase center (PTC), which catalyzes the formation of peptide bonds, thereby polymerizing the amino acids delivered by tRNAs into a polypeptide chain. The nascent polypeptides leave the ribosome through a tunnel in the LSU and interact with protein factors that function in enzymatic processing, targeting, and the membrane insertion of nascent chains at the exit of the ribosomal tunnel. The protein is Large ribosomal subunit protein uL30A of Saccharomyces cerevisiae (strain ATCC 204508 / S288c) (Baker's yeast).